A 270-amino-acid polypeptide reads, in one-letter code: uncharacterized protein (270 aa).

30–55 (ATGSLGRVAARALADAGARLTLAGGN) contributes to the NADP(+) binding site. Ser-157 provides a ligand contact to substrate. The active-site Proton acceptor is the Tyr-171.

Belongs to the short-chain dehydrogenases/reductases (SDR) family.

This is an uncharacterized protein from Mycobacterium tuberculosis (strain CDC 1551 / Oshkosh).